The sequence spans 87 residues: Phosphoribosyl-ATP pyrophosphatase (87 aa).

This sequence belongs to the PRA-PH family.

The protein localises to the cytoplasm. It carries out the reaction 1-(5-phospho-beta-D-ribosyl)-ATP + H2O = 1-(5-phospho-beta-D-ribosyl)-5'-AMP + diphosphate + H(+). It functions in the pathway amino-acid biosynthesis; L-histidine biosynthesis; L-histidine from 5-phospho-alpha-D-ribose 1-diphosphate: step 2/9. The polypeptide is Phosphoribosyl-ATP pyrophosphatase (Bifidobacterium adolescentis (strain ATCC 15703 / DSM 20083 / NCTC 11814 / E194a)).